The sequence spans 160 residues: MKTYSAKPAEISKKWILIDATNLVLGRLAAKVAVVLRGKDKPTYTPHMDCGNNVIIINAEHVKLTGDKSNAKSGKFYYRHSGFPGGIKVTTAGKILQSNYPERIIQLAVKRMLPSNKLGRKQFSNLYVYKGQTHPHAAQTPVLYDFAGKNSKNIRNQNIV.

This sequence belongs to the universal ribosomal protein uL13 family. Part of the 50S ribosomal subunit.

This protein is one of the early assembly proteins of the 50S ribosomal subunit, although it is not seen to bind rRNA by itself. It is important during the early stages of 50S assembly. The chain is Large ribosomal subunit protein uL13 from Orientia tsutsugamushi (strain Boryong) (Rickettsia tsutsugamushi).